The chain runs to 430 residues: Adenylosuccinate synthetase (430 aa).

GTP is bound by residues 12 to 18 (GDEGKGK) and 40 to 42 (GHT). D13 functions as the Proton acceptor in the catalytic mechanism. Mg(2+) is bound by residues D13 and G40. Residues 13–16 (DEGK), 38–41 (NAGH), T130, R144, Q224, T239, and R303 contribute to the IMP site. H41 acts as the Proton donor in catalysis. Residue 299-305 (VNTGRKR) participates in substrate binding. Residues R305, 331–333 (KLD), and 413–415 (STS) contribute to the GTP site.

This sequence belongs to the adenylosuccinate synthetase family. In terms of assembly, homodimer. The cofactor is Mg(2+).

Its subcellular location is the cytoplasm. The enzyme catalyses IMP + L-aspartate + GTP = N(6)-(1,2-dicarboxyethyl)-AMP + GDP + phosphate + 2 H(+). It participates in purine metabolism; AMP biosynthesis via de novo pathway; AMP from IMP: step 1/2. Plays an important role in the de novo pathway of purine nucleotide biosynthesis. Catalyzes the first committed step in the biosynthesis of AMP from IMP. This Nitrobacter winogradskyi (strain ATCC 25391 / DSM 10237 / CIP 104748 / NCIMB 11846 / Nb-255) protein is Adenylosuccinate synthetase.